Consider the following 194-residue polypeptide: uncharacterized protein (194 aa).

2 disordered regions span residues Lys52 to Lys71 and Ala86 to Ser194. Polar residues-rich tracts occupy residues Gly53–Glu63, Ala98–Asn111, and Ile119–Ala132. Over residues Asn133–Ser169 the composition is skewed to basic residues. The span at Ser175–Ser194 shows a compositional bias: basic and acidic residues.

This is an uncharacterized protein from Schizosaccharomyces pombe (strain 972 / ATCC 24843) (Fission yeast).